The following is a 296-amino-acid chain: Maltose/maltodextrin transport system permease protein MalG (296 aa).

Residues 1–12 are Cytoplasmic-facing; it reads MAMVQGKSLKYR. The chain crosses the membrane as a helical span at residues 13 to 35; sequence VWATHIALWAFLSMIIFPLLMIV. The Periplasmic segment spans residues 36–88; it reads AISFREGNFATGSLIPDNPSLEHWKLALGFSVTNADGSVTPPPFPVLTWLWNS. The region spanning 85 to 281 is the ABC transmembrane type-1 domain; sequence LWNSVKVAGI…LPITIVFLLA (197 aa). The chain crosses the membrane as a helical span at residues 89–111; that stretch reads VKVAGITSILIVALSTTSAYAFA. Topologically, residues 112-123 are cytoplasmic; the sequence is RLRFKGKETILK. A helical transmembrane segment spans residues 124-143; it reads AMMIFQMFPAVLALVALYAL. Over 144 to 152 the chain is Periplasmic; sequence FDKLGQYIP. Residues 153–175 form a helical membrane-spanning segment; that stretch reads FLGLNTHGGLIFSYLGGIALHVW. At 176 to 204 the chain is on the cytoplasmic side; sequence TIKGYFETIDNSLEEAAALDGATPWQAFR. The helical transmembrane segment at 205–227 threads the bilayer; sequence LVLLPLSVPILAVVFILSFIGVV. The Periplasmic portion of the chain corresponds to 228-257; it reads GEVPVASLLLSDVNSYTLAVGMQQYLYPQN. A helical membrane pass occupies residues 258–280; that stretch reads YLWGDFAAAAVLSALPITIVFLL. Topologically, residues 281 to 296 are cytoplasmic; it reads AQRWLVGGLTAGGVKG.

This sequence belongs to the binding-protein-dependent transport system permease family. MalFG subfamily. In terms of assembly, the complex is composed of two ATP-binding proteins (MalK), two transmembrane proteins (MalG and MalF) and a solute-binding protein (MalE).

The protein resides in the cell inner membrane. Part of the ABC transporter complex MalEFGK involved in maltose/maltodextrin import. Probably responsible for the translocation of the substrate across the membrane. The polypeptide is Maltose/maltodextrin transport system permease protein MalG (malG) (Vibrio vulnificus (strain CMCP6)).